Consider the following 455-residue polypeptide: Glutamyl-tRNA reductase (455 aa).

Substrate is bound by residues 49–52 (TCNR), serine 109, 114–116 (EAQ), and glutamine 120. The Nucleophile role is filled by cysteine 50. 190–195 (GAGAMG) is a binding site for NADP(+).

It belongs to the glutamyl-tRNA reductase family. Homodimer.

It catalyses the reaction (S)-4-amino-5-oxopentanoate + tRNA(Glu) + NADP(+) = L-glutamyl-tRNA(Glu) + NADPH + H(+). The protein operates within porphyrin-containing compound metabolism; protoporphyrin-IX biosynthesis; 5-aminolevulinate from L-glutamyl-tRNA(Glu): step 1/2. In terms of biological role, catalyzes the NADPH-dependent reduction of glutamyl-tRNA(Glu) to glutamate 1-semialdehyde (GSA). This Salinispora arenicola (strain CNS-205) protein is Glutamyl-tRNA reductase.